The sequence spans 276 residues: Ribosomal RNA small subunit methyltransferase A (276 aa).

S-adenosyl-L-methionine contacts are provided by Asn24, Leu26, Gly51, Glu72, Asp97, and Asn118.

This sequence belongs to the class I-like SAM-binding methyltransferase superfamily. rRNA adenine N(6)-methyltransferase family. RsmA subfamily.

It is found in the cytoplasm. It catalyses the reaction adenosine(1518)/adenosine(1519) in 16S rRNA + 4 S-adenosyl-L-methionine = N(6)-dimethyladenosine(1518)/N(6)-dimethyladenosine(1519) in 16S rRNA + 4 S-adenosyl-L-homocysteine + 4 H(+). Specifically dimethylates two adjacent adenosines (A1518 and A1519) in the loop of a conserved hairpin near the 3'-end of 16S rRNA in the 30S particle. May play a critical role in biogenesis of 30S subunits. This is Ribosomal RNA small subunit methyltransferase A from Clostridium acetobutylicum (strain ATCC 824 / DSM 792 / JCM 1419 / IAM 19013 / LMG 5710 / NBRC 13948 / NRRL B-527 / VKM B-1787 / 2291 / W).